The sequence spans 1480 residues: Cystic fibrosis transmembrane conductance regulator (1480 aa).

Over 1–77 the chain is Cytoplasmic; the sequence is MQRSPLEKAS…KLINALRRCF (77 aa). Residues 78-98 traverse the membrane as a helical segment; the sequence is FWRFMFYGILLYLGEVTKAVQ. One can recognise an ABC transmembrane type-1 1 domain in the interval 81–365; it reads FMFYGILLYL…WAVQTWYDSL (285 aa). Residues 99–122 lie on the Extracellular side of the membrane; the sequence is PLLLGRIIASYDPDNKTERSIAIY. Residues 123–146 form a helical membrane-spanning segment; that stretch reads LGIGLCLLFIVRTLLLHPAIFGLH. At 147 to 195 the chain is on the cytoplasmic side; it reads HIGMQMRIAMFSLIYKKTLKLSSRVLDKISIGQLVSLLSNNLNKFDEGL. The helical transmembrane segment at 196 to 216 threads the bilayer; that stretch reads ALAHFVWIAPLQVALLMGLIW. Topologically, residues 217-222 are extracellular; the sequence is ELLQAS. Residues 223-243 form a helical membrane-spanning segment; it reads AFCGLGFLIVLALFQAGLGRM. Residues 244–298 are Cytoplasmic-facing; the sequence is MMKYRDQRAGKINERLVITSEMIENIQSVKAYCWEEAMEKMIENLRQTELKLTRK. Residues 299–319 traverse the membrane as a helical segment; the sequence is AAYVRYFNSSAFFFSGFFVVF. At 320 to 339 the chain is on the extracellular side; sequence LSVLPYALIKGIVLRKIFTT. The chain crosses the membrane as a helical span at residues 340–358; it reads ISFCIVLRMAVTRQFPWAV. Residues 359–858 are Cytoplasmic-facing; the sequence is QTWYDSLGAI…YLRYITLHKS (500 aa). ATP-binding positions include tryptophan 401, serine 434, 458–465, and glutamine 493; that span reads GSTGAGKT. The 224-residue stretch at 423–646 folds into the ABC transporter 1 domain; that stretch reads NGDDNLFFSN…RPDFSSKLMG (224 aa). Cysteine 524 carries the S-palmitoyl cysteine lipid modification. 2 positions are modified to phosphoserine: serine 549 and serine 660. The interval 654–831 is disordered R region; the sequence is SSERRNSILT…EEINEEDLKE (178 aa). Serine 670 carries the phosphoserine; by PKA modification. At serine 686 the chain carries Phosphoserine. A Glycyl lysine isopeptide (Lys-Gly) (interchain with G-Cter in ubiquitin) cross-link involves residue lysine 688. Serine 700 and serine 712 each carry phosphoserine. Threonine 717 is modified (phosphothreonine). 6 positions are modified to phosphoserine: serine 737, serine 753, serine 768, serine 790, serine 795, and serine 813. Residues 859-879 form a helical membrane-spanning segment; the sequence is LIFVLIWCLVIFLAEVAASLV. The region spanning 859–1155 is the ABC transmembrane type-1 2 domain; the sequence is LIFVLIWCLV…AVNSSIDVDS (297 aa). At 880-918 the chain is on the extracellular side; it reads VLWFLGNTPFQDKGNSTYSRNNSYAVIITNTSSYYVFYI. Residues asparagine 894, asparagine 900, and asparagine 909 are each glycosylated (N-linked (GlcNAc...) asparagine). The discontinuously helical transmembrane segment at 919 to 939 threads the bilayer; it reads YVGVADTLLALGFFRGLPLVH. Residues 940–990 are Cytoplasmic-facing; it reads TLITVSKILHHKMLHSVLQAPMSTLNTLKAGGILNRFSKDIAILDDLLPLT. A helical membrane pass occupies residues 991–1011; that stretch reads IFDFIQLLLIVIGAIAVVSVL. Residues 1012–1013 lie on the Extracellular side of the membrane; the sequence is QP. Residues 1014–1034 form a helical membrane-spanning segment; sequence YILLATVPVIAAFILLRAYFL. Over 1035-1095 the chain is Cytoplasmic; the sequence is QTSQQLKQLE…TANWFLYLAT (61 aa). The chain crosses the membrane as a helical span at residues 1096 to 1116; the sequence is LRWFQMRIEIIFVIFFIAVTF. The Extracellular portion of the chain corresponds to 1117–1130; sequence ISILTTGEGEGTVG. Residues 1131–1151 traverse the membrane as a helical segment; sequence IILTLAMNIMSTLQWAVNSSI. Topologically, residues 1152–1480 are cytoplasmic; the sequence is DVDSLMRSVS…TEEEVQETRL (329 aa). The ABC transporter 2 domain occupies 1210–1443; that stretch reads MTIKDLTAKY…KSLFQQAISH (234 aa). Residues tyrosine 1219 and 1244–1251 contribute to the ATP site; that span reads GRTGSGKS. The segment at 1386-1480 is interaction with GORASP2; it reads RALKQAFADC…TEEEVQETRL (95 aa). A lipid anchor (S-palmitoyl cysteine) is attached at cysteine 1395. Serine 1444 and serine 1456 each carry phosphoserine. The interval 1452–1480 is disordered; the sequence is HRNSSKYKSPPQIASLKEETEEEVQETRL. Residues 1470-1480 are compositionally biased toward acidic residues; that stretch reads ETEEEVQETRL. The PDZ-binding motif lies at 1478–1480; it reads TRL.

The protein belongs to the ABC transporter superfamily. ABCC family. CFTR transporter (TC 3.A.1.202) subfamily. As to quaternary structure, monomer; does not require oligomerization for channel activity. May form oligomers in the membrane. Interacts with SLC26A3, SLC26A6 and NHERF1. Interacts with SHANK2. Interacts with MYO6. Interacts (via C-terminus) with GOPC (via PDZ domain); this promotes CFTR internalization and thereby decreases channel activity. Interacts with SLC4A7 through NHERF1. Found in a complex with MYO5B and RAB11A. Interacts with ANO1. Interacts with SLC26A8. Interacts with AHCYL1; the interaction increases CFTR activity. Interacts with CSE1L. The core-glycosylated form interacts with GORASP2 (via PDZ GRASP-type 1 domain) in respone to ER stress. Interacts with MARCHF2; the interaction leads to CFTR ubiqtuitination and degradation. Interacts with ADGRG2. Post-translationally, N-glycosylated. Phosphorylated; cAMP treatment promotes phosphorylation and activates the channel. Dephosphorylation decreases the ATPase activity (in vitro). Phosphorylation at PKA sites activates the channel. Phosphorylation at PKC sites enhances the response to phosphorylation by PKA. Phosphorylated by AMPK; this inhibits channel activity. In terms of processing, ubiquitinated, leading to its degradation in the lysosome. Deubiquitination by USP10 in early endosomes enhances its endocytic recycling to the cell membrane. Ubiquitinated by RNF185 during ER stress. Ubiquitinated by MARCHF2.

It is found in the apical cell membrane. Its subcellular location is the early endosome membrane. The protein resides in the cell membrane. It localises to the recycling endosome membrane. The protein localises to the endoplasmic reticulum membrane. It is found in the nucleus. It catalyses the reaction ATP + H2O + closed Cl(-) channel = ADP + phosphate + open Cl(-) channel.. It carries out the reaction chloride(in) = chloride(out). The catalysed reaction is hydrogencarbonate(in) = hydrogencarbonate(out). The enzyme catalyses ATP + H2O = ADP + phosphate + H(+). In terms of biological role, epithelial ion channel that plays an important role in the regulation of epithelial ion and water transport and fluid homeostasis. Mediates the transport of chloride ions across the cell membrane. Possesses an intrinsic ATPase activity and utilizes ATP to gate its channel; the passive flow of anions through the channel is gated by cycles of ATP binding and hydrolysis by the ATP-binding domains. The ion channel is also permeable to HCO(3)(-); selectivity depends on the extracellular chloride concentration. Exerts its function also by modulating the activity of other ion channels and transporters. Contributes to the regulation of the pH and the ion content of the epithelial fluid layer. Modulates the activity of the epithelial sodium channel (ENaC) complex, in part by regulating the cell surface expression of the ENaC complex. May regulate bicarbonate secretion and salvage in epithelial cells by regulating the transporter SLC4A7. Can inhibit the chloride channel activity of ANO1. Plays a role in the chloride and bicarbonate homeostasis during sperm epididymal maturation and capacitation. This is Cystic fibrosis transmembrane conductance regulator from Ateles geoffroyi (Black-handed spider monkey).